A 212-amino-acid polypeptide reads, in one-letter code: Superoxide dismutase [Fe] 1, chloroplastic (212 aa).

Alanine 2 carries the N-acetylalanine modification. The Fe cation site is built by histidine 35, histidine 87, aspartate 169, and histidine 173.

The protein belongs to the iron/manganese superoxide dismutase family. Homodimer. Interacts with cpn20/cpn21. Fe cation is required as a cofactor.

It is found in the cell membrane. It localises to the plastid. The protein resides in the chloroplast membrane. Its subcellular location is the chloroplast stroma. It carries out the reaction 2 superoxide + 2 H(+) = H2O2 + O2. Its activity is regulated as follows. Activated by cpn20/cpn21. In terms of biological role, destroys superoxide anion radicals which are normally produced within the cells and which are toxic to biological systems. In Arabidopsis thaliana (Mouse-ear cress), this protein is Superoxide dismutase [Fe] 1, chloroplastic (FSD1).